A 404-amino-acid polypeptide reads, in one-letter code: Phosphopentomutase (404 aa).

Mn(2+) is bound by residues aspartate 10, aspartate 303, histidine 308, aspartate 344, histidine 345, and histidine 356.

It belongs to the phosphopentomutase family. Mn(2+) is required as a cofactor.

The protein resides in the cytoplasm. It catalyses the reaction 2-deoxy-alpha-D-ribose 1-phosphate = 2-deoxy-D-ribose 5-phosphate. The enzyme catalyses alpha-D-ribose 1-phosphate = D-ribose 5-phosphate. The protein operates within carbohydrate degradation; 2-deoxy-D-ribose 1-phosphate degradation; D-glyceraldehyde 3-phosphate and acetaldehyde from 2-deoxy-alpha-D-ribose 1-phosphate: step 1/2. Isomerase that catalyzes the conversion of deoxy-ribose 1-phosphate (dRib-1-P) and ribose 1-phosphate (Rib-1-P) to deoxy-ribose 5-phosphate (dRib-5-P) and ribose 5-phosphate (Rib-5-P), respectively. In Shewanella baltica (strain OS223), this protein is Phosphopentomutase.